The sequence spans 103 residues: UPF0145 protein BC_5181 (103 aa).

Belongs to the UPF0145 family.

The protein is UPF0145 protein BC_5181 of Bacillus cereus (strain ATCC 14579 / DSM 31 / CCUG 7414 / JCM 2152 / NBRC 15305 / NCIMB 9373 / NCTC 2599 / NRRL B-3711).